Consider the following 310-residue polypeptide: Porphobilinogen deaminase (310 aa).

An S-(dipyrrolylmethanemethyl)cysteine modification is found at Cys-242.

Belongs to the HMBS family. As to quaternary structure, monomer. Dipyrromethane serves as cofactor.

It carries out the reaction 4 porphobilinogen + H2O = hydroxymethylbilane + 4 NH4(+). Its pathway is porphyrin-containing compound metabolism; protoporphyrin-IX biosynthesis; coproporphyrinogen-III from 5-aminolevulinate: step 2/4. In terms of biological role, tetrapolymerization of the monopyrrole PBG into the hydroxymethylbilane pre-uroporphyrinogen in several discrete steps. This Shewanella pealeana (strain ATCC 700345 / ANG-SQ1) protein is Porphobilinogen deaminase.